The chain runs to 511 residues: MAASWCIEKRGSIRNDSFRDNDNIPETGCLSIIVLGASGDLAKKKTFPALFNLYRQGFLQSNEVHIFGYARTKISDDDLRSRIRGYLSQGKENEGEVSEFLQLIKYVSGSYDSAEGFTSLDKAISEHEFSKNSTEGSSRRLFYFALPPSVYPSVCRMIKSYCMNKSDLGGWTRTVVEKPFGKDLASSEQLSSQIGELFDEPQIYRIDHYLGKELVQNLLVLRFANRFFLPLWNRDNIDNIQIVFREDFGTEGRGGYFDEYGIIRDIIQNHLLQVLCLVAMEKPVSQKPEHIRDEKVKVLQSMLPIEDEEVVLGQYEGYKDDPTVPNNSNTPTFATMVLRIHNERWEGVPFIMKAGKALNSRKAEIRVQFKDVPGDIFRCQKQGRNEFVIRLQPSEAMYMKLTVKKPGLEMSTVQSELDLSYGQRYQGVVIPEAYERLILDTIRGDQQHFVRRDELKAAWEIFTPLLHRIDNGEVKPIPYKPGSRGPAEADELLQNAGYVQTHGYIWIPPTL.

Residues Gly36–Lys43, Arg71, Tyr151, and Lys178 each bind NADP(+). D-glucose 6-phosphate-binding positions include Lys178, His208–Lys212, Glu246, and Asp265. His270 (proton acceptor) is an active-site residue. Lys353 contributes to the NADP(+) binding site. Positions 356 and 361 each coordinate D-glucose 6-phosphate. Residues Lys362, Arg366, and Arg390 each coordinate NADP(+). Gln392 is a binding site for D-glucose 6-phosphate. Residues Tyr398–Lys400, Asp418–Ser420, Arg484, and Trp506 each bind NADP(+).

It belongs to the glucose-6-phosphate dehydrogenase family. In terms of assembly, homotetramer. Found in tubers, stolons, roots, and flower buds.

The protein resides in the cytoplasm. The catalysed reaction is D-glucose 6-phosphate + NADP(+) = 6-phospho-D-glucono-1,5-lactone + NADPH + H(+). It functions in the pathway carbohydrate degradation; pentose phosphate pathway; D-ribulose 5-phosphate from D-glucose 6-phosphate (oxidative stage): step 1/3. Regulated by metabolites. Catalyzes the rate-limiting step of the oxidative pentose-phosphate pathway, which represents a route for the dissimilation of carbohydrates besides glycolysis. The main function of this enzyme is to generate NADPH for reductive biosyntheses. The polypeptide is Glucose-6-phosphate 1-dehydrogenase, cytoplasmic isoform (G6PDH) (Solanum tuberosum (Potato)).